A 211-amino-acid polypeptide reads, in one-letter code: 3-demethoxyubiquinol 3-hydroxylase (211 aa).

Positions 22–43 are disordered; sequence KHPLNPNRKSPSANTVDGQLSD. The span at 28–42 shows a compositional bias: polar residues; sequence NRKSPSANTVDGQLS. 6 residues coordinate Fe cation: Glu60, Glu90, His93, Glu142, Glu174, and His177.

Belongs to the COQ7 family. Fe cation serves as cofactor.

Its subcellular location is the cell membrane. It carries out the reaction a 5-methoxy-2-methyl-3-(all-trans-polyprenyl)benzene-1,4-diol + AH2 + O2 = a 3-demethylubiquinol + A + H2O. It functions in the pathway cofactor biosynthesis; ubiquinone biosynthesis. Functionally, catalyzes the hydroxylation of 2-nonaprenyl-3-methyl-6-methoxy-1,4-benzoquinol during ubiquinone biosynthesis. In Francisella philomiragia subsp. philomiragia (strain ATCC 25017 / CCUG 19701 / FSC 153 / O#319-036), this protein is 3-demethoxyubiquinol 3-hydroxylase.